The following is a 237-amino-acid chain: DNA repair protein RecO (237 aa).

This sequence belongs to the RecO family.

In terms of biological role, involved in DNA repair and RecF pathway recombination. The polypeptide is DNA repair protein RecO (Rickettsia akari (strain Hartford)).